The sequence spans 183 residues: Ribulose bisphosphate carboxylase small subunit, chloroplastic 1 (183 aa).

A chloroplast-targeting transit peptide spans 1–58; that stretch reads MASSMLSNAAMATTAATAGAQASMVAPFNGLKSFATFPITKKSSNDFSSLPSNGGRVQ.

Belongs to the RuBisCO small chain family. As to quaternary structure, heterohexadecamer of 8 large and 8 small subunits.

The protein resides in the plastid. It localises to the chloroplast. Functionally, ruBisCO catalyzes two reactions: the carboxylation of D-ribulose 1,5-bisphosphate, the primary event in carbon dioxide fixation, as well as the oxidative fragmentation of the pentose substrate. Both reactions occur simultaneously and in competition at the same active site. Although the small subunit is not catalytic it is essential for maximal activity. The sequence is that of Ribulose bisphosphate carboxylase small subunit, chloroplastic 1 from Amaranthus hypochondriacus (Prince-of-Wales feather).